The chain runs to 382 residues: F-box protein At3g19470 (382 aa).

The F-box domain occupies methionine 1–histidine 44.

This chain is F-box protein At3g19470, found in Arabidopsis thaliana (Mouse-ear cress).